We begin with the raw amino-acid sequence, 1136 residues long: Type I inositol polyphosphate 5-phosphatase 13 (1136 aa).

5 WD repeats span residues 147–185 (ETQTGRFLRNIACTETQLWAGQENGIRFWNLEDAYEAGC), 205–244 (VTTSPTMCLVADQSNKLLWSGHKDGKIRAWKMDQSSVSHD), 259–297 (AHRGPVNSIVISSYGDMWSCSEGGVIKIWPWDTLEKSLL), 436–475 (EDTRKTEAIVLAVDGTIWTGSISGLIVQWDGNGNRLRDVN), and 515–552 (SHNEPVIKLAAGGGFIFSLATHGGVRGWYVTSPGPLDN). Catalytic stretches follow at residues 782–798 (DMVAFFGDFNYRLFGIT) and 861–876 (KKRIPAWCDRVIYRDT). Lys940 participates in a covalent cross-link: Glycyl lysine isopeptide (Lys-Gly) (interchain with G-Cter in ubiquitin). A disordered region spans residues 1104–1136 (KNLGGSRRYPTDITRNGSTRPRTEDSVRRGKSR). Residues 1124 to 1136 (PRTEDSVRRGKSR) are compositionally biased toward basic and acidic residues.

It belongs to the inositol polyphosphate 5-phosphatase family. As to quaternary structure, interacts with KIN10, but not with PHOT1. Mg(2+) is required as a cofactor. In terms of tissue distribution, expressed in young seedlings and flowers. Highly expressed in anther and pollen grains, but not in pistils. Not detected in maturated roots, stems and rosette leaves.

The protein resides in the nucleus. The catalysed reaction is 1D-myo-inositol 1,4,5-trisphosphate + H2O = 1D-myo-inositol 1,4-bisphosphate + phosphate. In terms of biological role, converts inositol 1,4,5-trisphosphate (Ins(1,4,5)P3) to inositol 1,4-bisphosphate. Modulates cotyledon vein development through regulating auxin homeostasis. Involved in blue light responses. Decreases the amount of KIN10 degraded by the proteasome under low nutrient conditions. Participates with IP5P12 in the control of Ins(1,4,5)P3/Ca(2+) levels that is crucial for maintaining pollen dormancy and regulating early germination of pollen. May modulate auxin transport by regulating vesicle trafficking and thereby plays a role in root gravitropism. The polypeptide is Type I inositol polyphosphate 5-phosphatase 13 (Arabidopsis thaliana (Mouse-ear cress)).